A 448-amino-acid chain; its full sequence is MIPTFTALLCLGLSLGPRTHMQAGPLPKPTLWAEPGSVISWGNSVTIWCQGTLEAREYRLDKEESPAPWDRQNPLEPKNKARFSIPSMTEDYAGRYRCYYRSPVGWSQPSDPLELVMTGAYSKPTLSALPSPLVTSGKSVTLLCQSRSPMDTFLLIKERAAHPLLHLRSEHGAQQHQAEFPMSPVTSVHGGTYRCFSSHGFSHYLLSHPSDPLELIVSGSLEDPRPSPTRSVSTAAGPEDQPLMPTGSVPHSGLRRHWEVLIGVLVVSILLLSLLLFLLLQHWRQGKHRTLAQRQADFQRPPGAAEPEPKDGGLQRRSSPAADVQGENFCAAVKNTQPEDGVEMDTRQSPHDEDPQAVTYAKVKHSRPRREMASPPSPLSGEFLDTKDRQAEEDRQMDTEAAASEAPQDVTYAQLHSFTLRQKATEPPPSQEGASPAEPSVYATLAIH.

Positions 1-21 are cleaved as a signal peptide; that stretch reads MIPTFTALLCLGLSLGPRTHM. Topologically, residues 22 to 259 are extracellular; the sequence is QAGPLPKPTL…PHSGLRRHWE (238 aa). Ig-like C2-type domains follow at residues 27 to 118 and 124 to 218; these read PKPT…LVMT and PTLS…LIVS. 2 disulfides stabilise this stretch: Cys49–Cys98 and Cys144–Cys195. The tract at residues 217-248 is disordered; sequence VSGSLEDPRPSPTRSVSTAAGPEDQPLMPTGS. A helical membrane pass occupies residues 260 to 280; the sequence is VLIGVLVVSILLLSLLLFLLL. Residues 281 to 448 are Cytoplasmic-facing; that stretch reads QHWRQGKHRT…PSVYATLAIH (168 aa). The disordered stretch occupies residues 297 to 448; sequence DFQRPPGAAE…PSVYATLAIH (152 aa). Ser319 is modified (phosphoserine). Basic and acidic residues predominate over residues 344–354; that stretch reads MDTRQSPHDED. The ITIM motif 1 motif lies at 358–363; that stretch reads VTYAKV. A compositionally biased stretch (basic and acidic residues) spans 384–398; sequence LDTKDRQAEEDRQMD. 2 short sequence motifs (ITIM motif) span residues 410–415 and 440–445; these read VTYAQL and SVYATL.

As to quaternary structure, interacts with PTPN6. Detected on monocytes, macrophages, dendritic cells, natural killer cells and B-cells (at protein level). Expressed in the lung.

The protein localises to the cell membrane. In terms of biological role, inhibitory receptor involved in the down-regulation of the immune response and the development of immune tolerance. Receptor for FN1. Receptor for apolipoprotein APOE. Receptor for ALCAM/CD166. Inhibits receptor-mediated phosphorylation of cellular proteins and mobilization of intracellular calcium ions. Inhibits FCGR1A/CD64-mediated monocyte activation by inducing phosphatase-mediated down-regulation of the phosphorylation of multiple proteins including LCK, SYK, LAT and ERK, leading to a reduction in TNF production. This inhibition of monocyte activation occurs at least in part via binding to FN1. Inhibits T cell proliferation, inducing anergy, suppressing the differentiation of IFNG-producing CD8+ cytotoxic T cells and enhancing the generation of CD8+ T suppressor cells. Induces up-regulation of CD86 on dendritic cells. Interferes with TNFRSF5-signaling and NF-kappa-B up-regulation. The chain is Leukocyte immunoglobulin-like receptor subfamily B member 4 (LILRB4) from Homo sapiens (Human).